We begin with the raw amino-acid sequence, 446 residues long: Protein dyf-7 (446 aa).

Positions 1–24 (MNQLWRASCLQVLITFLLIHQNKA) are cleaved as a signal peptide. Residues 35–295 (DCIADSFTVV…KTCYKKVSDS (261 aa)) enclose the ZP domain. Cys-211 and Cys-273 form a disulfide bridge. A helical transmembrane segment spans residues 377–397 (IPLIIMGSLASLLLFSAGAAI).

In terms of assembly, monomer under reducing conditions. Homodimer under non-reducing conditions. May also form higher order oligomers. In terms of processing, proteolytically cleaved and secreted in vitro. In terms of tissue distribution, in the embryo, expressed in the excretory cell and, during dendrite formation, in the non-neuronal cells surrounding the sensory neurons, including hypodermal cells.

The protein localises to the cell membrane. It is found in the cell projection. The protein resides in the dendrite. Its subcellular location is the secreted. In terms of biological role, required for permeability of amphid and phasmid neurons to external dyes, chemotaxis to ammonium chloride, avoidance of high osmotic stimuli, male mating and dauer formation. Along with dex-1, enables neurite growth and maintenance by anchoring amphid dendritic tips during neuron cell body migration in embryonic and larval development. The chain is Protein dyf-7 from Caenorhabditis elegans.